A 227-amino-acid chain; its full sequence is Translation initiation factor 6 (227 aa).

It belongs to the eIF-6 family.

Its function is as follows. Binds to the 50S ribosomal subunit and prevents its association with the 30S ribosomal subunit to form the 70S initiation complex. This chain is Translation initiation factor 6, found in Methanococcus maripaludis (strain C6 / ATCC BAA-1332).